The sequence spans 245 residues: ATP synthase subunit a, chloroplastic (245 aa).

5 helical membrane passes run 34 to 54 (TLMT…LSNL), 93 to 113 (VPFL…GALL), 132 to 152 (INTT…AGIS), 197 to 217 (LVIA…LMLL), and 218 to 238 (GLFT…AYIG).

The protein belongs to the ATPase A chain family. As to quaternary structure, F-type ATPases have 2 components, CF(1) - the catalytic core - and CF(0) - the membrane proton channel. CF(1) has five subunits: alpha(3), beta(3), gamma(1), delta(1), epsilon(1). CF(0) has four main subunits: a, b, b' and c.

It localises to the plastid. It is found in the chloroplast thylakoid membrane. In terms of biological role, key component of the proton channel; it plays a direct role in the translocation of protons across the membrane. The polypeptide is ATP synthase subunit a, chloroplastic (Bigelowiella natans (Pedinomonas minutissima)).